Consider the following 400-residue polypeptide: Subtilisin-like protease 7 (400 aa).

The signal sequence occupies residues 1-20 (MGFITKAIPLALAAASVING). Positions 21–119 (AEILETRAGV…IERDARVQIN (99 aa)) are excised as a propeptide. Residues 36-118 (KYIVVMNDGI…YIERDARVQI (83 aa)) form the Inhibitor I9 domain. A Peptidase S8 domain is found at 129-400 (SWGLARVGSK…SKLINNGSGM (272 aa)). Catalysis depends on charge relay system residues Asp-161 and His-192. Residues Asn-222 and Asn-252 are each glycosylated (N-linked (GlcNAc...) asparagine). Ser-346 functions as the Charge relay system in the catalytic mechanism. Asn-396 carries N-linked (GlcNAc...) asparagine glycosylation.

It belongs to the peptidase S8 family.

Its subcellular location is the secreted. Its function is as follows. Secreted subtilisin-like serine protease with keratinolytic activity that contributes to pathogenicity. This Trichophyton soudanense protein is Subtilisin-like protease 7 (SUB7).